Here is a 249-residue protein sequence, read N- to C-terminus: Sesquipedalian-1 (249 aa).

The PH domain maps to Pro17–Phe113. 2 disordered regions span residues Gly134–Val159 and Glu194–Leu219. Residues Gln140–Leu152 show a composition bias toward pro residues. Ser213 carries the post-translational modification Phosphoserine. The F&amp;H motif lies at Pro223–Ile235.

It belongs to the sesquipedalian family. In terms of assembly, forms homodimers and heterodimers with PHETA2. Interacts with OCRL and INPP5B. Interaction with OCRL may be important for endosomal morphology and function.

It localises to the early endosome. It is found in the recycling endosome. Its subcellular location is the golgi apparatus. The protein resides in the trans-Golgi network. The protein localises to the cytoplasmic vesicle. It localises to the clathrin-coated vesicle. In terms of biological role, plays a role in endocytic trafficking. Required for receptor recycling from endosomes, both to the trans-Golgi network and the plasma membrane. The chain is Sesquipedalian-1 from Homo sapiens (Human).